The primary structure comprises 337 residues: DNA-directed RNA polymerase subunit alpha (337 aa).

The tract at residues 1 to 233 (MVREKVTVST…DLFIPFLHAQ (233 aa)) is alpha N-terminal domain (alpha-NTD). The interval 267–337 (IALKYIFIDQ…FTVDLPKNKF (71 aa)) is alpha C-terminal domain (alpha-CTD).

Belongs to the RNA polymerase alpha chain family. In plastids the minimal PEP RNA polymerase catalytic core is composed of four subunits: alpha, beta, beta', and beta''. When a (nuclear-encoded) sigma factor is associated with the core the holoenzyme is formed, which can initiate transcription.

It localises to the plastid. It is found in the chloroplast. The catalysed reaction is RNA(n) + a ribonucleoside 5'-triphosphate = RNA(n+1) + diphosphate. In terms of biological role, DNA-dependent RNA polymerase catalyzes the transcription of DNA into RNA using the four ribonucleoside triphosphates as substrates. This Platanus occidentalis (Sycamore) protein is DNA-directed RNA polymerase subunit alpha.